The primary structure comprises 308 residues: Tetraspanin-12 (308 aa).

Over 1 to 41 (MANRRQPVQHRAQQRVYRQSQIRYAPGAGGESEISCCVKYS) the chain is Cytoplasmic. Residues 42–62 (VFSFNVIFFLLGFGLLLFGVW) form a helical membrane-spanning segment. The Extracellular portion of the chain corresponds to 63 to 86 (AQIEKNTFVNMLSKASKLYLDPTW). Residues 87–107 (PLLIVGFLTFIIGFSGCVGSL) form a helical membrane-spanning segment. The Cytoplasmic segment spans residues 108-112 (RENTS). Residues 113 to 133 (FLTFYSTLLGLLLIAEFSAGV) form a helical membrane-spanning segment. Topologically, residues 134-268 (FAYACRDQLD…PKLQLWLNNN (135 aa)) are extracellular. An N-linked (GlcNAc...) asparagine glycan is attached at N213. Residues 269–289 (MLLVAVSMVIIAIIQVLGICF) traverse the membrane as a helical segment. The Cytoplasmic portion of the chain corresponds to 290–308 (AQNLKSDILAQRAKWYYTH).

It belongs to the tetraspanin (TM4SF) family. In terms of assembly, may interact with protease sup-17; the interaction promotes sup-17 cell membrane localization. As to expression, expressed in the germline.

The protein resides in the cell membrane. Its subcellular location is the cytoplasmic vesicle membrane. The protein localises to the endosome membrane. It localises to the early endosome membrane. It is found in the late endosome membrane. The protein resides in the recycling endosome membrane. Its subcellular location is the golgi apparatus. The protein localises to the trans-Golgi network membrane. Functions redundantly with tsp-14 isoform a to regulate body size, embryonic and vulva development. Functions redundantly with tsp-14 (isoforms a and b) to regulate cell fate specification in the postembryonic mesodermal M lineage and male development. May regulate BMP-like Sma/Mab signaling by mediating protease sup-17 trafficking to the cell surface. Together with tsp-14, functions redundantly to maintain cell surface levels of the BMP type II receptor daf-4 (but not BMP type I receptor sma-6), probably by regulating endosomal sorting of receptors and their targeting to degradative lysosomes. Together with tsp-14 involved in maintaining the structural and functional integrity of the endosomal network. Together with tsp-14, probably acts by modulating the activation of glp-1, a Notch-like receptor, to regulate germline maturation. Probably acts by modulating the activation of lin-12, a Notch-like receptor, to regulate cell fate specification such as the anchor cell/ventral uterine precursor cell decision. In Caenorhabditis elegans, this protein is Tetraspanin-12.